The sequence spans 170 residues: CASP-like protein 2D1 (170 aa).

Topologically, residues 1–4 are cytoplasmic; the sequence is MLKL. A helical transmembrane segment spans residues 5–25; that stretch reads LDFSLRLSVIPLSVATIWLTV. The Extracellular segment spans residues 26–47; it reads TNKQDNSIYGYLKYSDLTGLKY. Residues 48-68 form a helical membrane-spanning segment; that stretch reads MVFISGICASYAFIAAVSTWI. At 69–83 the chain is on the cytoplasmic side; that stretch reads RCIVTKTWLFFVSDQ. A helical transmembrane segment spans residues 84–104; it reads IVAYLMVTSGTAVLEILYLAY. At 105–127 the chain is on the extracellular side; sequence NGDREVSWSEACTSYGKFCYRMK. Residues 128-148 traverse the membrane as a helical segment; that stretch reads LAVILHALALSCFIILAVISA. Over 149-170 the chain is Cytoplasmic; that stretch reads YRAFSIFEPPLVPSKVVEEDRA.

It belongs to the Casparian strip membrane proteins (CASP) family. As to quaternary structure, homodimer and heterodimers.

Its subcellular location is the cell membrane. The protein is CASP-like protein 2D1 of Populus trichocarpa (Western balsam poplar).